The primary structure comprises 61 residues: uncharacterized protein (61 aa).

The protein belongs to the DUP/COS family.

This is an uncharacterized protein from Saccharomyces cerevisiae (strain ATCC 204508 / S288c) (Baker's yeast).